A 244-amino-acid chain; its full sequence is Phosphoadenosine 5'-phosphosulfate reductase (244 aa).

Catalysis depends on cysteine 239, which acts as the Nucleophile; cysteine thiosulfonate intermediate.

Belongs to the PAPS reductase family. CysH subfamily.

The protein localises to the cytoplasm. The enzyme catalyses [thioredoxin]-disulfide + sulfite + adenosine 3',5'-bisphosphate + 2 H(+) = [thioredoxin]-dithiol + 3'-phosphoadenylyl sulfate. The protein operates within sulfur metabolism; hydrogen sulfide biosynthesis; sulfite from sulfate: step 3/3. Functionally, catalyzes the formation of sulfite from phosphoadenosine 5'-phosphosulfate (PAPS) using thioredoxin as an electron donor. The sequence is that of Phosphoadenosine 5'-phosphosulfate reductase from Serratia proteamaculans (strain 568).